The primary structure comprises 588 residues: Sulfite reductase [NADPH] hemoprotein beta-component (588 aa).

[4Fe-4S] cluster is bound by residues Cys442, Cys448, Cys487, and Cys491. Cys491 provides a ligand contact to siroheme.

It belongs to the nitrite and sulfite reductase 4Fe-4S domain family. In terms of assembly, alpha(8)-beta(8). The alpha component is a flavoprotein, the beta component is a hemoprotein. Siroheme is required as a cofactor. Requires [4Fe-4S] cluster as cofactor.

The enzyme catalyses hydrogen sulfide + 3 NADP(+) + 3 H2O = sulfite + 3 NADPH + 4 H(+). It participates in sulfur metabolism; hydrogen sulfide biosynthesis; hydrogen sulfide from sulfite (NADPH route): step 1/1. Functionally, component of the sulfite reductase complex that catalyzes the 6-electron reduction of sulfite to sulfide. This is one of several activities required for the biosynthesis of L-cysteine from sulfate. This Actinobacillus pleuropneumoniae serotype 3 (strain JL03) protein is Sulfite reductase [NADPH] hemoprotein beta-component.